A 251-amino-acid polypeptide reads, in one-letter code: Leucine-rich repeat and calponin homology domain-containing protein 1 (251 aa).

Positions 73–97 (SNGSEYSPNEIRANSPAISPTANST) are disordered. Phosphoserine is present on residues serine 87 and serine 91. Over residues 88–97 (PAISPTANST) the composition is skewed to polar residues. Threonine 123 is subject to Phosphothreonine. A Calponin-homology (CH) domain is found at 131-244 (MREEKELVEH…ITVQALLDVT (114 aa)).

Interacts (via LRR repeats) with unphosphorylated DOCK8 (via DHR-2 domain); the interaction prevents the interaction between DOCK8 and CDC42.

Its subcellular location is the cytoplasm. Acts as a negative regulator of GTPase CDC42 by sequestering CDC42-guanine exchange factor DOCK8. Probably by preventing CDC42 activation, negatively regulates CD4(+) T-cell migration. In Felis catus (Cat), this protein is Leucine-rich repeat and calponin homology domain-containing protein 1.